The primary structure comprises 239 residues: tRNA1(Val) (adenine(37)-N6)-methyltransferase (239 aa).

It belongs to the methyltransferase superfamily. tRNA (adenine-N(6)-)-methyltransferase family.

The protein resides in the cytoplasm. The catalysed reaction is adenosine(37) in tRNA1(Val) + S-adenosyl-L-methionine = N(6)-methyladenosine(37) in tRNA1(Val) + S-adenosyl-L-homocysteine + H(+). Its function is as follows. Specifically methylates the adenine in position 37 of tRNA(1)(Val) (anticodon cmo5UAC). In Vibrio parahaemolyticus serotype O3:K6 (strain RIMD 2210633), this protein is tRNA1(Val) (adenine(37)-N6)-methyltransferase.